Consider the following 738-residue polypeptide: Alanine--tRNA ligase (738 aa).

Zn(2+) contacts are provided by H564, H568, C666, and H670.

This sequence belongs to the class-II aminoacyl-tRNA synthetase family. In terms of assembly, homotetramer. Zn(2+) is required as a cofactor.

It localises to the cytoplasm. The enzyme catalyses tRNA(Ala) + L-alanine + ATP = L-alanyl-tRNA(Ala) + AMP + diphosphate. In terms of biological role, catalyzes the attachment of alanine to tRNA(Ala) in a two-step reaction: alanine is first activated by ATP to form Ala-AMP and then transferred to the acceptor end of tRNA(Ala). Also edits incorrectly charged Ser-tRNA(Ala) and Gly-tRNA(Ala) via its editing domain. The polypeptide is Alanine--tRNA ligase (alaS) (Yersinia pestis bv. Antiqua (strain Antiqua)).